The primary structure comprises 354 residues: Coiled-coil domain-containing protein 86 (354 aa).

A disordered region spans residues 1–354 (MDTPLRRSRR…QPPQRPATKV (354 aa)). Phosphoserine is present on residues Ser-18 and Ser-24. Residues 31–44 (VLVEFESNPKETGE) show a composition bias toward basic and acidic residues. A phosphoserine mark is found at Ser-47 and Ser-53. Residues 49–58 (PGLGSPSRQP) show a composition bias toward low complexity. Residue Thr-60 is modified to Phosphothreonine. A phosphoserine mark is found at Ser-61, Ser-64, Ser-75, Ser-86, Ser-105, Ser-108, Ser-123, and Ser-183. The span at 97 to 107 (FPQNQPESSPE) shows a compositional bias: polar residues. The span at 199–211 (PAREGPAPKKREG) shows a compositional bias: basic and acidic residues. Phosphoserine occurs at positions 212 and 213. Residues 232–248 (GKPKSGRVWKDRSKKRF) are compositionally biased toward basic residues. 2 stretches are compositionally biased toward basic and acidic residues: residues 267–289 (DRQERKLAKDFARHLEEEKERRR) and 297–311 (AENLRRRLENERKAE). Positions 274-317 (AKDFARHLEEEKERRRQEKKKRRAENLRRRLENERKAEIVQVIR) form a coiled coil. Residues 320 to 330 (AKLKRAKKKQL) are compositionally biased toward basic residues. Arg-336 is modified (citrulline).

In terms of processing, citrullinated by PADI4.

It localises to the nucleus. The protein resides in the chromosome. Its subcellular location is the nucleolus. Required for proper chromosome segregation during mitosis and error-free mitotic progression. This chain is Coiled-coil domain-containing protein 86, found in Bos taurus (Bovine).